Reading from the N-terminus, the 353-residue chain is UPF0283 membrane protein YcjF (353 aa).

The next 3 helical transmembrane spans lie at 70–90 (MVMG…VQWT), 100–120 (VALG…GSVV), and 213–233 (ESTL…FIAW).

Belongs to the UPF0283 family.

The protein localises to the cell inner membrane. The sequence is that of UPF0283 membrane protein YcjF from Salmonella schwarzengrund (strain CVM19633).